Consider the following 475-residue polypeptide: uncharacterized protein (475 aa).

4Fe-4S ferredoxin-type domains are found at residues alanine 303–tyrosine 333 and tyrosine 352–leucine 381. The [4Fe-4S] cluster site is built by cysteine 312, cysteine 315, cysteine 318, cysteine 322, cysteine 362, cysteine 365, cysteine 368, and cysteine 372.

It belongs to the LutB/YkgF family.

This is an uncharacterized protein from Escherichia coli (strain K12).